The following is a 194-amino-acid chain: Histone H1.0-A (194 aa).

Disordered regions lie at residues 1–29 (MTEN…YSDM) and 96–194 (ADEV…GRKK). An H15 domain is found at 22–95 (DHPKYSDMIL…GASGSFRLAK (74 aa)). Composition is skewed to basic residues over residues 102–164 (PAKK…KTVR) and 172–194 (KAKK…GRKK).

The protein belongs to the histone H1/H5 family.

The protein resides in the nucleus. Its subcellular location is the chromosome. Histones H1 are necessary for the condensation of nucleosome chains into higher-order structures. The histones H1.0 are found in cells that are in terminal stages of differentiation or that have low rates of cell division. This chain is Histone H1.0-A (h1-0-a), found in Xenopus laevis (African clawed frog).